Reading from the N-terminus, the 194-residue chain is dCTP deaminase, dUMP-forming (194 aa).

DCTP-binding positions include 105 to 110, Asp123, 131 to 133, Gln152, Tyr166, Lys174, and Gln178; these read RSSMGR and TLE. Glu133 acts as the Proton donor/acceptor in catalysis.

Belongs to the dCTP deaminase family. In terms of assembly, homotrimer.

The catalysed reaction is dCTP + 2 H2O = dUMP + NH4(+) + diphosphate. The protein operates within pyrimidine metabolism; dUMP biosynthesis; dUMP from dCTP: step 1/1. Its function is as follows. Bifunctional enzyme that catalyzes both the deamination of dCTP to dUTP and the hydrolysis of dUTP to dUMP without releasing the toxic dUTP intermediate. This is dCTP deaminase, dUMP-forming from Methanobrevibacter smithii (strain ATCC 35061 / DSM 861 / OCM 144 / PS).